A 159-amino-acid chain; its full sequence is Ribosomal RNA large subunit methyltransferase H (159 aa).

Residue glycine 108 coordinates S-adenosyl-L-methionine.

The protein belongs to the RNA methyltransferase RlmH family. Homodimer.

The protein resides in the cytoplasm. It carries out the reaction pseudouridine(1915) in 23S rRNA + S-adenosyl-L-methionine = N(3)-methylpseudouridine(1915) in 23S rRNA + S-adenosyl-L-homocysteine + H(+). In terms of biological role, specifically methylates the pseudouridine at position 1915 (m3Psi1915) in 23S rRNA. This is Ribosomal RNA large subunit methyltransferase H from Lactobacillus johnsonii (strain CNCM I-12250 / La1 / NCC 533).